A 524-amino-acid polypeptide reads, in one-letter code: Protopine 6-monooxygenase (524 aa).

3 consecutive transmembrane segments (helical) span residues 4–24 (LMLA…VFLY), 232–252 (LASL…DIFQ), and 319–339 (MIMG…SLLM). Position 462 (C462) interacts with heme.

The protein belongs to the cytochrome P450 family. Requires heme as cofactor.

The protein localises to the endoplasmic reticulum membrane. It carries out the reaction protopine + reduced [NADPH--hemoprotein reductase] + O2 = 6-hydroxyprotopine + oxidized [NADPH--hemoprotein reductase] + H2O + H(+). Its pathway is alkaloid biosynthesis. Its function is as follows. Catalyzes the conversion of protopine and allocryptopine to dihydrosanguinarine and dihydrochelerythrine, respectively, in the biosynthesis of isoquinoline alkaloid sanguinarine. In Eschscholzia californica (California poppy), this protein is Protopine 6-monooxygenase (CYP82N2v2).